The chain runs to 236 residues: MAIKTLGAKAAAALDQELMSTGAFSIDQLMELAGLAVSQAVYRLQPLESGRRILVACGPGNNGGDGLVAARHLRHYGYNPTVFYPKRSKNDLYQRLAKQLEDLDVPFVDDFSSAVSSTDHIVDAIFGFSFSGEVREPFPAVIQALQETKLPVTSVDAPSSWDIENGPPESGLGSSFMPTALVSLTAPKPLVNHFRGRHFIGGRFVTPAIASKYGFEVPEYKGIDQVVEVETTGQKL.

Residues 11–217 (AAALDQELMS…AIASKYGFEV (207 aa)) enclose the YjeF N-terminal domain. (6S)-NADPHX is bound at residue 61-65 (NNGGD). Residues N62 and D123 each coordinate K(+). Residues 127 to 133 (GFSFSGE) and D156 each bind (6S)-NADPHX. S159 serves as a coordination point for K(+).

Belongs to the NnrE/AIBP family. K(+) is required as a cofactor.

The protein localises to the cytoplasm. It localises to the mitochondrion. The enzyme catalyses (6R)-NADHX = (6S)-NADHX. The catalysed reaction is (6R)-NADPHX = (6S)-NADPHX. In terms of biological role, catalyzes the epimerization of the S- and R-forms of NAD(P)HX, a damaged form of NAD(P)H that is a result of enzymatic or heat-dependent hydration. This is a prerequisite for the S-specific NAD(P)H-hydrate dehydratase to allow the repair of both epimers of NAD(P)HX. In Fusarium vanettenii (strain ATCC MYA-4622 / CBS 123669 / FGSC 9596 / NRRL 45880 / 77-13-4) (Fusarium solani subsp. pisi), this protein is NAD(P)H-hydrate epimerase.